We begin with the raw amino-acid sequence, 228 residues long: MSATKTLEAVARDRVGKGAARAVRRQGQIPAVIYGGNQAPQAIAIDLIRARTLIYAGGFKTTVFEIDAGGKKTRAIPRDYQLDPVSGVPLHVDFLRVVAGQTVTVDVPVHFVNEDQAPGIKQKGGTLNVALHTVSLEVAPDQIPDAIEVDLAGREIGDVIHASDLRLPAGTYTGEPTDTVANLLPPTVLGADVEAEEAAVAEAQSAESAEGKAEAEAEATNEKNKSEA.

The tract at residues 196–228 is disordered; the sequence is EEAAVAEAQSAESAEGKAEAEAEATNEKNKSEA. The segment covering 209 to 228 has biased composition (basic and acidic residues); sequence AEGKAEAEAEATNEKNKSEA.

It belongs to the bacterial ribosomal protein bL25 family. CTC subfamily. Part of the 50S ribosomal subunit; part of the 5S rRNA/L5/L18/L25 subcomplex. Contacts the 5S rRNA. Binds to the 5S rRNA independently of L5 and L18.

Functionally, this is one of the proteins that binds to the 5S RNA in the ribosome where it forms part of the central protuberance. This chain is Large ribosomal subunit protein bL25, found in Methylorubrum extorquens (strain CM4 / NCIMB 13688) (Methylobacterium extorquens).